The primary structure comprises 200 residues: Imidazoleglycerol-phosphate dehydratase (200 aa).

This sequence belongs to the imidazoleglycerol-phosphate dehydratase family.

It is found in the cytoplasm. It carries out the reaction D-erythro-1-(imidazol-4-yl)glycerol 3-phosphate = 3-(imidazol-4-yl)-2-oxopropyl phosphate + H2O. Its pathway is amino-acid biosynthesis; L-histidine biosynthesis; L-histidine from 5-phospho-alpha-D-ribose 1-diphosphate: step 6/9. This Prosthecochloris aestuarii (strain DSM 271 / SK 413) protein is Imidazoleglycerol-phosphate dehydratase.